The chain runs to 363 residues: Protein LEG1 homolog (363 aa).

Residues 1–19 (MQCVWTLSLLQLVALWANA) form the signal peptide. N-linked (GlcNAc...) asparagine glycosylation is found at asparagine 79, asparagine 261, and asparagine 292.

Belongs to the LEG1 family.

Its subcellular location is the secreted. May be involved in early liver development. This chain is Protein LEG1 homolog, found in Oncorhynchus mykiss (Rainbow trout).